A 300-amino-acid polypeptide reads, in one-letter code: Transcription initiation factor IIB 1 (300 aa).

Residues 3–34 (GKRVCPVCGSTEFIYDPSRGEIVCKVCGYVIE) form a TFIIB-type zinc finger. Zn(2+)-binding residues include cysteine 7, cysteine 10, cysteine 26, and cysteine 29. Tandem repeats lie at residues 114–197 (SELD…ARHL) and 210–291 (DYVN…ELVE).

This sequence belongs to the TFIIB family.

In terms of biological role, stabilizes TBP binding to an archaeal box-A promoter. Also responsible for recruiting RNA polymerase II to the pre-initiation complex (DNA-TBP-TFIIB). This chain is Transcription initiation factor IIB 1, found in Thermococcus kodakarensis (strain ATCC BAA-918 / JCM 12380 / KOD1) (Pyrococcus kodakaraensis (strain KOD1)).